We begin with the raw amino-acid sequence, 338 residues long: Envelope glycoprotein K (338 aa).

The signal sequence occupies residues 1–30; the sequence is MLAVRSLQHLTTVIFITAYGLVLAWYIVFG. Over 31–121 the chain is Extracellular; it reads ASPLHRCIYA…VNCLEALWDT (91 aa). An involved in fusion region spans residues 31-121; the sequence is ASPLHRCIYA…VNCLEALWDT (91 aa). Residues Asn-48 and Asn-58 are each glycosylated (N-linked (GlcNAc...) asparagine; by host). Residues 122-140 form a helical membrane-spanning segment; sequence QMRLVVVGWFLYLAFVALH. The Cytoplasmic portion of the chain corresponds to 141-212; it reads QRRCMFGVVS…DPVTFLYHRP (72 aa). The helical transmembrane segment at 213 to 233 threads the bilayer; it reads AIGVIVGCELLLRFVALGLIV. The Extracellular segment spans residues 234–243; sequence GTALISRGAC. A helical transmembrane segment spans residues 244 to 264; sequence AITHPLFLTITTWCFVSIIAL. Residues 265–301 lie on the Cytoplasmic side of the membrane; sequence TELYFILRRGSAPKNAEPAAPRGRSKGWSGVCGRCCS. The tract at residues 265-301 is interaction with UL20; that stretch reads TELYFILRRGSAPKNAEPAAPRGRSKGWSGVCGRCCS. The helical transmembrane segment at 302–322 threads the bilayer; sequence IILSGIAVRLCYIAVVAGVVL. Residues 323-338 are Extracellular-facing; that stretch reads VALRYEQEIQRRLFDL.

Belongs to the alphaherpesvirinae glycoprotein K family. In terms of assembly, interacts (via UL20 interaction region) with protein UL20 (via N-terminus); this interaction probably plays a role in the coordinate transport of protein UL20 and gK to the trans-Golgi network (TGN), and is required for the cell surface expression of gK. N-glycosylated.

It localises to the host cell membrane. Its subcellular location is the host endosome membrane. The protein resides in the host Golgi apparatus membrane. In terms of biological role, glycoprotein that probably modulates membrane fusion events during secondary envelopment of cytoplasmic capsids that bud into specific trans-Golgi network (TGN)-derived membranes. Also plays a role, together with gB, in virus-induced cell-to-cell fusion (syncytia formation). Seems to block fusion of virions with infected-cell membranes. This is Envelope glycoprotein K (gK) from Human herpesvirus 2 (strain HG52) (HHV-2).